The chain runs to 274 residues: Diaminopimelate epimerase (274 aa).

Asparagine 11 and asparagine 76 together coordinate substrate. Residue cysteine 85 is the Proton donor of the active site. Substrate-binding positions include 86 to 87, asparagine 157, asparagine 189, and 207 to 208; these read GN and ER. Cysteine 216 (proton acceptor) is an active-site residue. Position 217–218 (217–218) interacts with substrate; it reads GT.

It belongs to the diaminopimelate epimerase family. In terms of assembly, homodimer.

It localises to the cytoplasm. The enzyme catalyses (2S,6S)-2,6-diaminopimelate = meso-2,6-diaminopimelate. Its pathway is amino-acid biosynthesis; L-lysine biosynthesis via DAP pathway; DL-2,6-diaminopimelate from LL-2,6-diaminopimelate: step 1/1. In terms of biological role, catalyzes the stereoinversion of LL-2,6-diaminopimelate (L,L-DAP) to meso-diaminopimelate (meso-DAP), a precursor of L-lysine and an essential component of the bacterial peptidoglycan. The chain is Diaminopimelate epimerase from Thermobifida fusca (strain YX).